Here is a 349-residue protein sequence, read N- to C-terminus: N-acetyltaurine hydrolase (349 aa).

Positions 26, 28, 169, 201, 230, and 298 each coordinate a divalent metal cation.

Belongs to the metallo-dependent hydrolases superfamily. Phosphotriesterase family. It depends on a divalent metal cation as a cofactor.

It localises to the cytoplasm. The protein localises to the cytosol. It carries out the reaction N-acetyltaurine + H2O = taurine + acetate. The catalysed reaction is N-propanoyltaurine + H2O = propanoate + taurine. The enzyme catalyses N-acetyl-L-methionine + H2O = L-methionine + acetate. It catalyses the reaction N-acetyl-L-isoleucine + H2O = L-isoleucine + acetate. It carries out the reaction N-acetyl-L-leucine + H2O = L-leucine + acetate. The catalysed reaction is N-acetyl-L-valine + H2O = L-valine + acetate. Its function is as follows. N-acetyltaurine hydrolase that regulates feeding by catalyzing the hydrolysis of N-acetyltaurine into taurine and acetate. N-acetyltaurine has anorexigenic and anti-obesity effects that are dependent on GFRAL receptor and GDF15. PTER also acts on other N-acetyl amino acids (Met, Ile, Leu, Val) and N-propionyltaurine, but at lower rates. In Bos taurus (Bovine), this protein is N-acetyltaurine hydrolase (PTER).